We begin with the raw amino-acid sequence, 1032 residues long: Structural polyprotein (1032 aa).

Aspartate 23 serves as a coordination point for a divalent metal cation. A Peptidase S50 domain is found at 501 to 723 (ADSPLGEEHW…QTLPHWTAGS (223 aa)). The Nucleophile role is filled by serine 627. Residue lysine 670 is part of the active site. The disordered stretch occupies residues 986 to 1014 (LVNQPATAPRVPPRRIVSAQTAQTDPPGR). The tract at residues 1021–1030 (LRRVRGEDND) is interaction with VP1 protein.

Homotrimer. A central divalent metal stabilizes the VP2 trimer. In terms of assembly, homodimer. Interacts (via C-terminus) with VP1 in the cytoplasm. Capsid VP3 interacts with VP2. In terms of processing, specific enzymatic cleavages yield mature proteins. The capsid assembly seems to be regulated by polyprotein processing. The protease VP4 cleaves itself off the polyprotein, thus releasing pre-VP2 and VP3 within the infected cell. During capsid assembly, the C-terminus of pre-VP2 is further processed by VP4, giving rise to VP2, the external capsid protein and three small peptides that all stay closely associated with the capsid.

It localises to the virion. It is found in the host cytoplasm. Functionally, capsid protein VP2 self assembles to form an icosahedral capsid with a T=13 symmetry, about 70 nm in diameter, and consisting of 260 VP2 trimers. The capsid encapsulates the genomic dsRNA. VP2 is also involved in attachment and entry into the host cell. In terms of biological role, the precursor of VP2 plays an important role in capsid assembly. First, pre-VP2 and VP2 oligomers assemble to form a procapsid. Then, the pre-VP2 intermediates may be processed into VP2 proteins by proteolytic cleavage mediated by VP4 to obtain the mature virion. The final capsid is composed of pentamers and hexamers but VP2 has a natural tendency to assemble into all-pentameric structures. Therefore pre-VP2 may be required to allow formation of the hexameric structures. Its function is as follows. Protease VP4 is a serine protease that cleaves the polyprotein into its final products. Pre-VP2 is first partially cleaved, and may be completely processed by VP4 upon capsid maturation. Capsid protein VP3 plays a key role in virion assembly by providing a scaffold for the capsid made of VP2. May self-assemble to form a T=4-like icosahedral inner-capsid composed of at least 180 trimers. Plays a role in genomic RNA packaging by recruiting VP1 into the capsid and interacting with the dsRNA genome segments to form a ribonucleoprotein complex. Additionally, the interaction of the VP3 C-terminal tail with VP1 removes the inherent structural blockade of the polymerase active site. Thus, VP3 can also function as a transcriptional activator. Functionally, structural peptide 1 is a small peptide derived from pre-VP2 C-terminus. It destabilizes and perforates cell membranes, suggesting a role during entry. In terms of biological role, structural peptide 2 is a small peptide derived from pre-VP2 C-terminus. It is not essential for the virus viability, but viral growth is affected when missing. Its function is as follows. Structural peptide 3 is a small peptide derived from pre-VP2 C-terminus. It is not essential for the virus viability, but viral growth is affected when missing. This Drosophila melanogaster (Fruit fly) protein is Structural polyprotein.